The primary structure comprises 1112 residues: MTLTSPPRTRADSRYSWVPAAAGWTVGVIATLSLIASVSPLVRWIIRVPREFVDDYIFNFPDTSFAWAFVLALLAGALAARKRIAWWILLLYMVAAAGWNVADLLTGDESVVDEMGEVIGLAFHLAAVAFLLLARPLFWARVRRGALFKAAGVLAAGMAVGVLVGWGLLELFPGDLERDYRLAYAANRVFAFAGVDPDAFDGQHPHVVVNALLGLFGALALMAAAIVLFQSQRSENALTGEDESAIRGLLELYGKNDSLGYFATRRDKSVVFAPNGRAAITYRVEVGVCLASGDPVGDPKAWPQAIDAWLALCGTYGWAPGVMGASVGGAEAFRAAGLSAIQLGDEAILLPDSFRLSGPDMRAVRQAVTRARRAGVTVRIRRHRELSPEQMAEVIAHADAWRDTETERGFSMALGRLGDPADSDCLLVEAVQGGNGGQERSDPGDGTVVAMLSLVPWGSNGASLDVMRRSPQSPNGTIELMVSELCMQAEDIGVTRISLNFAMFRSAFEQGAQLGAGPVARLWRWLLVFFSRWWQLETLYRSNMKYQPQWVPRYACYEDARLIPRVGVASVIAEGFLVLPFSRRNKQHTGHHTSAPQDLVASGVLHHDGTAPDMSGLRTDTADDEPPRLPEQVRVRMAKLKALQADGVDAYPVGRPPSHTAAAAVDSPDDVELDVAGRVLRIRDYGGVLFAQLRDWSGEVQLLLDNSTLEQGSTADFTAAIDLGDLIAATGTMGYSKNGTRSLLVRHWRLTGKCLRPLPDKWKGLTDQEARVRARYVDLAVNTEARDLIRARSGVLHAIRDTLYHKGFLEVETPILQQIHGGANARPFLTHINAYDLDLYLRIAPELYLKRLCVGGVERVFELGRAFRNEGVDFSHNPEFTLLEAYQAHADYHVWIDGCRELIQNAAMAANGEHVFLRPRDDGVLEPVDISGPWTVKTVHEAVSEALGEHIDAATELPTLRKLADAAGIPYLTHWDEGAVVLEMYEHLVEDRTQKPTFYKDFPTSVSPLTRPHRSIAGVAERWDLVAWGVELGTAYSELTDPVEQRRRLQAQSLLAAGGDPEAMELDEDFLQAMEYAMPPTGGLGMGVDRVVMLITGRSIRETLPFPLARPR.

The segment at 1-613 (MTLTSPPRTR…VLHHDGTAPD (613 aa)) is phosphatidylglycerol lysyltransferase. 7 helical membrane passes run 18–38 (VPAA…IASV), 60–80 (FPDT…ALAA), 84–104 (IAWW…VADL), 118–138 (VIGL…RPLF), 152–172 (GVLA…LELF), 209–229 (VNAL…IVLF), and 308–328 (AWLA…ASVG). Positions 614-1112 (MSGLRTDTAD…TLPFPLARPR (499 aa)) are lysine--tRNA ligase. Residues 675 to 748 (VAGRVLRIRD…GTRSLLVRHW (74 aa)) constitute a DNA-binding region (OB). Positions 1024 and 1031 each coordinate Mg(2+).

It in the N-terminal section; belongs to the LPG synthetase family. In the C-terminal section; belongs to the class-II aminoacyl-tRNA synthetase family. Mg(2+) serves as cofactor.

The protein localises to the cell membrane. The enzyme catalyses tRNA(Lys) + L-lysine + ATP = L-lysyl-tRNA(Lys) + AMP + diphosphate. The catalysed reaction is L-lysyl-tRNA(Lys) + a 1,2-diacyl-sn-glycero-3-phospho-(1'-sn-glycerol) = a 1,2-diacyl-sn-glycero-3-phospho-1'-(3'-O-L-lysyl)-sn-glycerol + tRNA(Lys). Catalyzes the production of L-lysyl-tRNA(Lys)transfer and the transfer of a lysyl group from L-lysyl-tRNA(Lys) to membrane-bound phosphatidylglycerol (PG), which produces lysylphosphatidylglycerol (LPG), one of the components of the bacterial membrane with a positive net charge. LPG synthesis contributes to the resistance to cationic antimicrobial peptides (CAMPs) and likely protects M.tuberculosis against the CAMPs produced by competiting microorganisms (bacteriocins). In fact, the modification of anionic phosphatidylglycerol with positively charged L-lysine results in repulsion of the peptides. This Mycobacterium sp. (strain KMS) protein is Lysylphosphatidylglycerol biosynthesis bifunctional protein LysX (lysX).